A 1072-amino-acid chain; its full sequence is Carbamoyl phosphate synthase large chain (1072 aa).

Positions 1 to 401 are carboxyphosphate synthetic domain; the sequence is MPKYKDINKV…SLLKAVRSLE (401 aa). Residues R129, R169, G175, G176, K208, L210, E215, G241, V242, H243, Q284, and E298 each contribute to the ATP site. In terms of domain architecture, ATP-grasp 1 spans 133 to 327; the sequence is KRKMQEIGEP…IAKIAAKIAI (195 aa). Mg(2+) is bound by residues Q284, E298, and N300. Residues Q284, E298, and N300 each contribute to the Mn(2+) site. The interval 402-544 is oligomerization domain; it reads IKAYGLRLNN…YIYSTYGEED (143 aa). The segment at 545–929 is carbamoyl phosphate synthetic domain; the sequence is EVEIHDMPKV…ALYKALEGAG (385 aa). The ATP-grasp 2 domain maps to 671–861; the sequence is SKLLRELNIN…MVKLAVEVAL (191 aa). ATP-binding residues include R707, K746, I748, E752, G777, V778, H779, S780, Q820, and E832. The Mg(2+) site is built by Q820, E832, and N834. 3 residues coordinate Mn(2+): Q820, E832, and N834. Positions 930 to 1072 constitute an MGS-like domain; sequence LKIPKKGKIL…QKDNVKNLVL (143 aa). The allosteric domain stretch occupies residues 930-1072; it reads LKIPKKGKIL…QKDNVKNLVL (143 aa).

It belongs to the CarB family. In terms of assembly, composed of two chains; the small (or glutamine) chain promotes the hydrolysis of glutamine to ammonia, which is used by the large (or ammonia) chain to synthesize carbamoyl phosphate. Tetramer of heterodimers (alpha,beta)4. It depends on Mg(2+) as a cofactor. Mn(2+) serves as cofactor.

The enzyme catalyses hydrogencarbonate + L-glutamine + 2 ATP + H2O = carbamoyl phosphate + L-glutamate + 2 ADP + phosphate + 2 H(+). The catalysed reaction is hydrogencarbonate + NH4(+) + 2 ATP = carbamoyl phosphate + 2 ADP + phosphate + 2 H(+). It functions in the pathway amino-acid biosynthesis; L-arginine biosynthesis; carbamoyl phosphate from bicarbonate: step 1/1. It participates in pyrimidine metabolism; UMP biosynthesis via de novo pathway; (S)-dihydroorotate from bicarbonate: step 1/3. In terms of biological role, large subunit of the glutamine-dependent carbamoyl phosphate synthetase (CPSase). CPSase catalyzes the formation of carbamoyl phosphate from the ammonia moiety of glutamine, carbonate, and phosphate donated by ATP, constituting the first step of 2 biosynthetic pathways, one leading to arginine and/or urea and the other to pyrimidine nucleotides. The large subunit (synthetase) binds the substrates ammonia (free or transferred from glutamine from the small subunit), hydrogencarbonate and ATP and carries out an ATP-coupled ligase reaction, activating hydrogencarbonate by forming carboxy phosphate which reacts with ammonia to form carbamoyl phosphate. This is Carbamoyl phosphate synthase large chain from Thermoanaerobacter pseudethanolicus (strain ATCC 33223 / 39E) (Clostridium thermohydrosulfuricum).